The primary structure comprises 506 residues: Cobyric acid synthase (506 aa).

The 198-residue stretch at Asp-251–Phe-448 folds into the GATase cobBQ-type domain. The Nucleophile role is filled by Cys-332. The active site involves His-440.

The protein belongs to the CobB/CobQ family. CobQ subfamily. As to quaternary structure, homodimer.

The protein operates within cofactor biosynthesis; adenosylcobalamin biosynthesis. Functionally, catalyzes amidations at positions B, D, E, and G on adenosylcobyrinic A,C-diamide. NH(2) groups are provided by glutamine, and one molecule of ATP is hydrogenolyzed for each amidation. In Salmonella typhimurium (strain LT2 / SGSC1412 / ATCC 700720), this protein is Cobyric acid synthase (cbiP).